Consider the following 135-residue polypeptide: S-adenosylmethionine decarboxylase proenzyme (135 aa).

The Schiff-base intermediate with substrate; via pyruvic acid role is filled by Ser63. Pyruvic acid (Ser); by autocatalysis is present on Ser63. His68 functions as the Proton acceptor; for processing activity in the catalytic mechanism. Catalysis depends on Cys83, which acts as the Proton donor; for catalytic activity.

This sequence belongs to the prokaryotic AdoMetDC family. Type 1 subfamily. In terms of assembly, heterotetramer of two alpha and two beta chains arranged as a dimer of alpha/beta heterodimers. Pyruvate is required as a cofactor. In terms of processing, is synthesized initially as an inactive proenzyme. Formation of the active enzyme involves a self-maturation process in which the active site pyruvoyl group is generated from an internal serine residue via an autocatalytic post-translational modification. Two non-identical subunits are generated from the proenzyme in this reaction, and the pyruvate is formed at the N-terminus of the alpha chain, which is derived from the carboxyl end of the proenzyme. The post-translation cleavage follows an unusual pathway, termed non-hydrolytic serinolysis, in which the side chain hydroxyl group of the serine supplies its oxygen atom to form the C-terminus of the beta chain, while the remainder of the serine residue undergoes an oxidative deamination to produce ammonia and the pyruvoyl group blocking the N-terminus of the alpha chain.

The catalysed reaction is S-adenosyl-L-methionine + H(+) = S-adenosyl 3-(methylsulfanyl)propylamine + CO2. It functions in the pathway amine and polyamine biosynthesis; S-adenosylmethioninamine biosynthesis; S-adenosylmethioninamine from S-adenosyl-L-methionine: step 1/1. Catalyzes the decarboxylation of S-adenosylmethionine to S-adenosylmethioninamine (dcAdoMet), the propylamine donor required for the synthesis of the polyamines spermine and spermidine from the diamine putrescine. This chain is S-adenosylmethionine decarboxylase proenzyme, found in Thermodesulfovibrio yellowstonii (strain ATCC 51303 / DSM 11347 / YP87).